The chain runs to 391 residues: Alpha-2B adrenergic receptor (391 aa).

The chain crosses the membrane as a helical span at residues 1 to 25 (AIAAVITFLILFTIFGNALVILAVL). Residues 26 to 36 (TSRSLRAPQNL) lie on the Cytoplasmic side of the membrane. A helical transmembrane segment spans residues 37–62 (FLVSLAAADILVATLIIPFSLANELL). Over 63 to 72 (GYWYFRRTWC) the chain is Extracellular. The cysteines at positions 72 and 151 are disulfide-linked. The helical transmembrane segment at 73–95 (EVYLALDVLFCTSSIVHLCAISL) threads the bilayer. The Cytoplasmic segment spans residues 96-117 (DRYWAVSRALEYNSKRTPRRIK). The helical transmembrane segment at 118–140 (CIILTVWLIAAVISLPPLIYKGD) threads the bilayer. Topologically, residues 141-156 (QGPQPRGRPQCKLNQE) are extracellular. The chain crosses the membrane as a helical span at residues 157 to 180 (AWYILASSIGSFFAPCLIMILVYL). At 181-355 (RIYLIAKRSH…LTREKRFTFV (175 aa)) the chain is on the cytoplasmic side. Disordered stretches follow at residues 194-218 (PRAK…APSS) and 233-312 (EANR…PLQQ). The span at 233–247 (EANRHSKSTGEKVEG) shows a compositional bias: basic and acidic residues. Positions 256 to 266 (PGVPPSWPPLP) are enriched in pro residues. Over residues 271–281 (GQEEDIYRASP) the composition is skewed to basic and acidic residues. Residues 282 to 294 (EEEAGDDEEEECE) show a composition bias toward acidic residues. Over residues 295–309 (PQAVPVSPASACSPP) the composition is skewed to low complexity. A helical membrane pass occupies residues 356–379 (LAVVIGVFVLCWFPFFFSYSLGAI). At 380-388 (CPQHCKVPH) the chain is on the extracellular side. A helical transmembrane segment spans residues 389-391 (GLF).

It belongs to the G-protein coupled receptor 1 family. Adrenergic receptor subfamily. ADRA2B sub-subfamily. Interacts with RAB26. Interacts with PPP1R9B. Interacts with GGA1, GGA2 and GGA3.

Its subcellular location is the cell membrane. In terms of biological role, alpha-2 adrenergic receptors mediate the catecholamine-induced inhibition of adenylate cyclase through the action of G proteins. This chain is Alpha-2B adrenergic receptor (ADRA2B), found in Erinaceus europaeus (Western European hedgehog).